Consider the following 234-residue polypeptide: Adenosine 5'-phosphosulfate reductase (234 aa).

The [4Fe-4S] cluster site is built by cysteine 120, cysteine 121, cysteine 203, and cysteine 206. Catalysis depends on cysteine 229, which acts as the Nucleophile; cysteine thiosulfonate intermediate.

It belongs to the PAPS reductase family. CysH subfamily. [4Fe-4S] cluster serves as cofactor.

The protein resides in the cytoplasm. It catalyses the reaction [thioredoxin]-disulfide + sulfite + AMP + 2 H(+) = adenosine 5'-phosphosulfate + [thioredoxin]-dithiol. Its pathway is sulfur metabolism; hydrogen sulfide biosynthesis; sulfite from sulfate. Its function is as follows. Catalyzes the formation of sulfite from adenosine 5'-phosphosulfate (APS) using thioredoxin as an electron donor. The chain is Adenosine 5'-phosphosulfate reductase from Bacillus cereus (strain ATCC 14579 / DSM 31 / CCUG 7414 / JCM 2152 / NBRC 15305 / NCIMB 9373 / NCTC 2599 / NRRL B-3711).